A 327-amino-acid chain; its full sequence is Ubiquinone biosynthesis protein COQ4, mitochondrial (327 aa).

Zn(2+) is bound by residues His-208, Asp-209, His-212, and Glu-224.

It belongs to the COQ4 family. Component of a multi-subunit COQ enzyme complex, composed of at least COQ3, COQ4, COQ5, COQ6, COQ7 and COQ9. Requires Zn(2+) as cofactor.

It is found in the mitochondrion inner membrane. It carries out the reaction a 4-hydroxy-3-methoxy-5-(all-trans-polyprenyl)benzoate + H(+) = a 2-methoxy-6-(all-trans-polyprenyl)phenol + CO2. The protein operates within cofactor biosynthesis; ubiquinone biosynthesis. Functionally, lyase that catalyzes the C1-decarboxylation of 4-hydroxy-3-methoxy-5-(all-trans-polyprenyl)benzoic acid into 2-methoxy-6-(all-trans-polyprenyl)phenol during ubiquinone biosynthesis. The protein is Ubiquinone biosynthesis protein COQ4, mitochondrial of Lachancea thermotolerans (strain ATCC 56472 / CBS 6340 / NRRL Y-8284) (Yeast).